The following is a 538-amino-acid chain: Bifunctional purine biosynthesis protein PurH (538 aa).

An MGS-like domain is found at 6–158 (KHIPAPDLHR…KNHAYVATVV (153 aa)).

The protein belongs to the PurH family.

It catalyses the reaction (6R)-10-formyltetrahydrofolate + 5-amino-1-(5-phospho-beta-D-ribosyl)imidazole-4-carboxamide = 5-formamido-1-(5-phospho-D-ribosyl)imidazole-4-carboxamide + (6S)-5,6,7,8-tetrahydrofolate. The catalysed reaction is IMP + H2O = 5-formamido-1-(5-phospho-D-ribosyl)imidazole-4-carboxamide. The protein operates within purine metabolism; IMP biosynthesis via de novo pathway; 5-formamido-1-(5-phospho-D-ribosyl)imidazole-4-carboxamide from 5-amino-1-(5-phospho-D-ribosyl)imidazole-4-carboxamide (10-formyl THF route): step 1/1. It participates in purine metabolism; IMP biosynthesis via de novo pathway; IMP from 5-formamido-1-(5-phospho-D-ribosyl)imidazole-4-carboxamide: step 1/1. The chain is Bifunctional purine biosynthesis protein PurH from Brucella melitensis biotype 2 (strain ATCC 23457).